Reading from the N-terminus, the 206-residue chain is Ephrin-A4 (206 aa).

The first 25 residues, 1–25, serve as a signal peptide directing secretion; the sequence is MRLLPLLRTVLWAALLGSRLPGCSS. Residues 26-158 enclose the Ephrin RBD domain; that stretch reads LRHPIYWNSS…RLQVSVCCKE (133 aa). N-linked (GlcNAc...) asparagine glycosylation is present at N33. The Cell attachment site signature appears at 41-43; that stretch reads RGD. Disulfide bonds link C58/C99 and C86/C147. N98 carries an N-linked (GlcNAc...) asparagine glycan. The disordered stretch occupies residues 161-180; that stretch reads SSHESAHPVGSPGESGTSGW. A lipid anchor (GPI-anchor amidated serine) is attached at S175. A propeptide spans 176–206 (removed in mature form); that stretch reads GTSGWRGGHAPSPLCLLLLLLLPILRLLRVL.

The protein belongs to the ephrin family. In terms of tissue distribution, expressed in myogenic progenitor cells.

It localises to the cell membrane. Functionally, cell surface GPI-bound ligand for Eph receptors, a family of receptor tyrosine kinases which are crucial for migration, repulsion and adhesion during neuronal, vascular and epithelial development. Binds promiscuously Eph receptors residing on adjacent cells, leading to contact-dependent bidirectional signaling into neighboring cells. May play a role in the interaction between activated B-lymphocytes and dendritic cells in tonsils. The sequence is that of Ephrin-A4 (Efna4) from Mus musculus (Mouse).